Here is a 348-residue protein sequence, read N- to C-terminus: D-alanine--D-alanine ligase (348 aa).

Residues 132–334 (KRILEVAGVP…YSDLIKELVV (203 aa)) form the ATP-grasp domain. 162–217 (LEKLTFPVFVKPANMGSSVGISKAENESELRSAIDLALKYDSRILIEQGVVAREIE) lines the ATP pocket. Mg(2+) contacts are provided by D288, E301, and N303.

Belongs to the D-alanine--D-alanine ligase family. It depends on Mg(2+) as a cofactor. The cofactor is Mn(2+).

Its subcellular location is the cytoplasm. It catalyses the reaction 2 D-alanine + ATP = D-alanyl-D-alanine + ADP + phosphate + H(+). The protein operates within cell wall biogenesis; peptidoglycan biosynthesis. In terms of biological role, cell wall formation. This is D-alanine--D-alanine ligase from Streptococcus thermophilus (strain ATCC BAA-250 / LMG 18311).